We begin with the raw amino-acid sequence, 63 residues long: uncharacterized protein (63 aa).

This is an uncharacterized protein from Haemophilus influenzae (strain ATCC 51907 / DSM 11121 / KW20 / Rd).